The sequence spans 309 residues: Ankyrin repeat protein VACWR203 (309 aa).

ANK repeat units lie at residues 13 to 44 (SVFKGFSDKVRKNDLDMNVVKELLSNGASLTI), 110 to 142 (KYGTPLHILASNKKLITPNYMKLLVYNGNDINA), 160 to 189 (FVYHNIEYGIRYYNEKIIDAFIELGADLTI), 197 to 231 (PVVYCIHSNAEYGYNNITNIKIIRKLLNLSRRASH), and 269 to 298 (EGRTPLHCAIQHNFTQIAKYLLDRGADIVV).

The protein belongs to the orthopoxviruses VACWR203 protein family.

The polypeptide is Ankyrin repeat protein VACWR203 (Bos taurus (Bovine)).